The chain runs to 235 residues: Claudin-16 (235 aa).

Over 1–3 (MKD) the chain is Cytoplasmic. Residues 4–24 (LLQYAACFLAIFSTGFLIVAT) form a helical membrane-spanning segment. Over 25–79 (WTDCWMVNADDSLEVSTKCRGLWWECVTNAFDGIRTCDEYDSIYAEHPLKLVVTR) the chain is Extracellular. Residues 80–100 (ALMITADILAGFGFITLLLGL) form a helical membrane-spanning segment. At 101–115 (DCVKFLPDDPQIKVR) the chain is on the cytoplasmic side. Residues 116–136 (LCFVAGTTLLIAGTPGIIGSV) form a helical membrane-spanning segment. Over 137–169 (WYAVDVYVERSSLVLHNIFLGIQYKFGWSCWLG) the chain is Extracellular. The helical transmembrane segment at 170–190 (MAGSLGCFLAGALLTCCLYLF) threads the bilayer. Topologically, residues 191–235 (KDVGPERNYPYAMRKPYSTAGVSMAKSYKAPRTETAKMYAVDTRV) are cytoplasmic. The Interaction with TJP1 motif lies at 233-235 (TRV).

This sequence belongs to the claudin family. As to quaternary structure, can form heteropolymeric tight junction strands with other claudins. Interacts with CLDN19. Cannot form tight junction strands on its own. Interacts (via PDZ-binding motif TRV) with TJP1 (via PDZ domain). Expressed in the corticomedullary axis of the TAL, specifically in the cortex and the outer stripe of outer medulla (OSOM) zone (at protein level).

The protein localises to the cell junction. It is found in the tight junction. It localises to the cell membrane. It catalyses the reaction Mg(2+)(in) = Mg(2+)(out). The catalysed reaction is Ca(2+)(in) = Ca(2+)(out). The enzyme catalyses Na(+)(in) = Na(+)(out). It carries out the reaction K(+)(in) = K(+)(out). It catalyses the reaction Rb(+)(in) = Rb(+)(out). The catalysed reaction is Cs(+)(in) = Cs(+)(out). The enzyme catalyses Li(+)(in) = Li(+)(out). In terms of biological role, forms paracellular channels: coassembles with CLDN19 into tight junction strands with cation-selective channels through the strands, conveying epithelial permeability in a process known as paracellular tight junction permeability. Involved in the maintenance of ion gradients along the nephron. In the thick ascending limb (TAL) of Henle's loop, facilitates sodium paracellular permeability from the interstitial compartment to the lumen, contributing to the lumen-positive transepithelial potential that drives paracellular magnesium and calcium reabsorption. The sequence is that of Claudin-16 from Mus musculus (Mouse).